The primary structure comprises 670 residues: uncharacterized protein (670 aa).

This is an uncharacterized protein from Ictalurid herpesvirus 1 (strain Auburn) (IcHV-1).